The primary structure comprises 61 residues: Metallothionein-1E (61 aa).

N-acetylmethionine is present on Met1. A beta region spans residues 1–29 (MDPNCSCATGGSCTCAGSCKCKECKCTSC). A divalent metal cation is bound by residues Cys5, Cys7, Cys13, Cys15, Cys19, Cys21, Cys24, Cys26, Cys29, Cys33, Cys34, Cys36, Cys37, Cys41, Cys44, Cys48, Cys50, Cys57, Cys59, and Cys60. Residues 30 to 61 (KKSCCSCCPVGCAKCAQGCVCKGASEKCSCCA) are alpha.

It belongs to the metallothionein superfamily. Type 1 family. As to quaternary structure, monomer.

Functionally, metallothioneins have a high content of cysteine residues that bind various heavy metals; these proteins are transcriptionally regulated by both heavy metals and glucocorticoids. In Homo sapiens (Human), this protein is Metallothionein-1E (MT1E).